A 224-amino-acid polypeptide reads, in one-letter code: Proteasome subunit beta (224 aa).

Positions M1–G6 are cleaved as a propeptide — removed in mature form; by autocatalysis. T7 serves as the catalytic Nucleophile.

It belongs to the peptidase T1B family. The 20S proteasome core is composed of 14 alpha and 14 beta subunits that assemble into four stacked heptameric rings, resulting in a barrel-shaped structure. The two inner rings, each composed of seven catalytic beta subunits, are sandwiched by two outer rings, each composed of seven alpha subunits. The catalytic chamber with the active sites is on the inside of the barrel. Has a gated structure, the ends of the cylinder being occluded by the N-termini of the alpha-subunits. Is capped at one or both ends by the proteasome regulatory ATPase, PAN.

The protein localises to the cytoplasm. The enzyme catalyses Cleavage of peptide bonds with very broad specificity.. The formation of the proteasomal ATPase PAN-20S proteasome complex, via the docking of the C-termini of PAN into the intersubunit pockets in the alpha-rings, triggers opening of the gate for substrate entry. Interconversion between the open-gate and close-gate conformations leads to a dynamic regulation of the 20S proteasome proteolysis activity. Functionally, component of the proteasome core, a large protease complex with broad specificity involved in protein degradation. The M.jannaschii proteasome is able to cleave oligopeptides after Glu, Asp, Tyr, Phe, Trp, slightly after Arg, but not after Ala. Thus, displays caspase-like and chymotrypsin-like activities and low level of trypsin-like activity. The protein is Proteasome subunit beta of Methanocaldococcus jannaschii (strain ATCC 43067 / DSM 2661 / JAL-1 / JCM 10045 / NBRC 100440) (Methanococcus jannaschii).